A 387-amino-acid polypeptide reads, in one-letter code: MKETRAEKRKKDKSDRATVDKVLDKRTLKVLERLQARGKLVNLQGSLCTGKESNVYLGEASTSLCSKFIKNRYSVTEEPGREGQIVPVVVKIFKTSIMSFRDRERYIRSEKRFQRFCTSNSRKLIKVWAEKEVRNLKRLNNAGIPSPEPIYLKNNILVMTQIGRCSEVAPRLRDASIKDLEGCYQQCVKIIRDMYKKAGLVHADLSEFNLLYFEGVVYVIDVGQSVEIDHDNAQRFLIMDINNINSFFSRKGVSVAKGNDLFEEISGNVIPLYLKDIDIGRDAFIPSRVSEVGNEEDLLAFAADSRSREFGSTTDSDLSSTGEASVEDSDASLGATESRGGGNIREEKKRKKKTVKELNRIRRASRISKKEKKRIFKRYIGMKKRKN.

The Protein kinase domain occupies 41–387 (VNLQGSLCTG…RYIGMKKRKN (347 aa)). An ATP-binding site is contributed by Lys91. Asp204 serves as the catalytic Proton acceptor. The Mg(2+) site is built by Asn209 and Asp221. The active-site 4-aspartylphosphate intermediate is Asp221. Residues 309–372 (EFGSTTDSDL…RASRISKKEK (64 aa)) form a disordered region. The span at 312–321 (STTDSDLSST) shows a compositional bias: low complexity. A compositionally biased stretch (basic residues) spans 361–372 (IRRASRISKKEK).

It belongs to the protein kinase superfamily. RIO-type Ser/Thr kinase family. The cofactor is Mg(2+).

The protein resides in the cytoplasm. The enzyme catalyses L-seryl-[protein] + ATP = O-phospho-L-seryl-[protein] + ADP + H(+). The catalysed reaction is L-threonyl-[protein] + ATP = O-phospho-L-threonyl-[protein] + ADP + H(+). It carries out the reaction ATP + H2O = ADP + phosphate + H(+). Required for the final endonucleolytic cleavage at site D converting 20S pre-rRNA into the mature 18S rRNA. Required for the final steps of cytoplasmic maturation of the 40S ribosomal subunit. Despite the protein kinase domain is proposed to act predominantly as an ATPase. Has a role in the cell cycle where it is required for entrance into S-phase and in the control of the onset of anaphase. Appears to also be involved in the maintenance of chromosome stability and correct mitotic segregation. The chain is Probable serine/threonine-protein kinase RIO1 homolog (RIO1) from Encephalitozoon cuniculi (strain GB-M1) (Microsporidian parasite).